The sequence spans 441 residues: ATP-dependent protease ATPase subunit HslU (441 aa).

ATP-binding positions include Ile-18, 60-65 (GVGKTE), Asp-254, Glu-319, and Arg-391.

The protein belongs to the ClpX chaperone family. HslU subfamily. In terms of assembly, a double ring-shaped homohexamer of HslV is capped on each side by a ring-shaped HslU homohexamer. The assembly of the HslU/HslV complex is dependent on binding of ATP.

The protein localises to the cytoplasm. Functionally, ATPase subunit of a proteasome-like degradation complex; this subunit has chaperone activity. The binding of ATP and its subsequent hydrolysis by HslU are essential for unfolding of protein substrates subsequently hydrolyzed by HslV. HslU recognizes the N-terminal part of its protein substrates and unfolds these before they are guided to HslV for hydrolysis. The polypeptide is ATP-dependent protease ATPase subunit HslU (Shewanella frigidimarina (strain NCIMB 400)).